The following is a 365-amino-acid chain: Class E basic helix-loop-helix protein 22 (365 aa).

3 disordered regions span residues 34 to 93, 134 to 156, and 188 to 225; these read AFRS…GGGG, GRGS…DGRC, and HLHG…KEQK. Positions 82 to 93 are enriched in gly residues; that stretch reads GGGGAGGGGGGG. A compositionally biased stretch (gly residues) spans 191–216; the sequence is GGAGLPPGGSTGSGGGGSGGGGGGGS. Positions 226–280 constitute a bHLH domain; sequence ALRLNINARERRRMHDLNDALDELRAVIPYAHSPSVRKLSKIATLLLAKNYILMQ.

As to quaternary structure, heterodimer with other bHLH proteins, like TCF3/E47. As to expression, kidney, lung, brain and pancreas (insulinoma).

It is found in the nucleus. In terms of biological role, inhibits DNA binding of TCF3/E47 homodimers and TCF3 (E47)/NEUROD1 heterodimers and acts as a strong repressor of Neurod1 and Myod-responsive genes, probably by heterodimerization with class a basic helix-loop-helix factors. Despite the presence of an intact basic domain, does not bind to DNA. The polypeptide is Class E basic helix-loop-helix protein 22 (BHLHE22) (Mesocricetus auratus (Golden hamster)).